The primary structure comprises 226 residues: Lipoprotein-releasing system ATP-binding protein LolD 1 (226 aa).

In terms of domain architecture, ABC transporter spans 5 to 225; the sequence is LKLDGIRKSY…IVRVVDGKIA (221 aa). ATP is bound at residue 42–49; that stretch reads GPSGSGKS.

Belongs to the ABC transporter superfamily. Lipoprotein translocase (TC 3.A.1.125) family. The complex is composed of two ATP-binding proteins (LolD) and two transmembrane proteins (LolC and LolE).

The protein resides in the cell inner membrane. Functionally, part of the ABC transporter complex LolCDE involved in the translocation of mature outer membrane-directed lipoproteins, from the inner membrane to the periplasmic chaperone, LolA. Responsible for the formation of the LolA-lipoprotein complex in an ATP-dependent manner. This Rhodopseudomonas palustris (strain ATCC BAA-98 / CGA009) protein is Lipoprotein-releasing system ATP-binding protein LolD 1.